Reading from the N-terminus, the 398-residue chain is Delta-aminolevulinic acid dehydratase, chloroplastic (398 aa).

The tract at residues 48–87 is disordered; sequence VPEAPPVPPTPASPAGTPVVPSLPIQRRPRRNRRSPALRS. Residues 50-59 show a composition bias toward pro residues; the sequence is EAPPVPPTPA. Positions 60-69 are enriched in low complexity; that stretch reads SPAGTPVVPS. Residues 74 to 83 show a composition bias toward basic residues; that stretch reads RRPRRNRRSP. The Schiff-base intermediate with substrate role is filled by Lys-266. Arg-276 and Lys-288 together coordinate 5-aminolevulinate. Glu-304 lines the Mg(2+) pocket. The active-site Schiff-base intermediate with substrate is the Lys-319. 5-aminolevulinate contacts are provided by Ser-345 and Tyr-384.

The protein belongs to the ALAD family. In terms of assembly, homooctamer; formed by oligomerization of dimers. Probably also forms lower oligomers. The cofactor is Mg(2+).

Its subcellular location is the plastid. The protein resides in the chloroplast. It catalyses the reaction 2 5-aminolevulinate = porphobilinogen + 2 H2O + H(+). Its pathway is porphyrin-containing compound metabolism; protoporphyrin-IX biosynthesis; coproporphyrinogen-III from 5-aminolevulinate: step 1/4. Its activity is regulated as follows. Activated by magnesium. Inhibited by succinyl acetone. Enzyme activity may depend on the oligomerization state, where the fully active octamer may dissociate and reassemble into less active lower oligomers. In terms of biological role, catalyzes an early step in the biosynthesis of tetrapyrroles. Binds two molecules of 5-aminolevulinate per subunit, each at a distinct site, and catalyzes their condensation to form porphobilinogen. This chain is Delta-aminolevulinic acid dehydratase, chloroplastic (HEMB), found in Pisum sativum (Garden pea).